The primary structure comprises 160 residues: MELNKNYLTEEGLKQLEAELEHLIQVKRPAIIKLLQEARDQGDLSENADYDAAKAQQGEIETRIAEIQDILANVKLINESQTKKANKVTLGSTVEIYDYSSKTHEKYTIVGALEANPEEHRISNESPLAHAIYGRLVDDECDVVGIEVPYRVKIVKIINW.

Positions 8-28 (LTEEGLKQLEAELEHLIQVKR) form a coiled coil.

This sequence belongs to the GreA/GreB family.

Functionally, necessary for efficient RNA polymerase transcription elongation past template-encoded arresting sites. The arresting sites in DNA have the property of trapping a certain fraction of elongating RNA polymerases that pass through, resulting in locked ternary complexes. Cleavage of the nascent transcript by cleavage factors such as GreA or GreB allows the resumption of elongation from the new 3'terminus. GreA releases sequences of 2 to 3 nucleotides. This Mycoplasma pneumoniae (strain ATCC 29342 / M129 / Subtype 1) (Mycoplasmoides pneumoniae) protein is Transcription elongation factor GreA.